The sequence spans 474 residues: Shugoshin-1 (474 aa).

Disordered regions lie at residues M1–A53, V189–S226, N322–K356, and V422–N442. Composition is skewed to polar residues over residues G12–S22 and E190–C201. Positions K211–S220 are enriched in basic residues. Composition is skewed to polar residues over residues N322 to D341 and V422 to E431.

It belongs to the shugoshin family. Highly expressed in tissues containing meiocytes. Expressed at much lower level in leaves and pollen-containing flowers.

The protein resides in the nucleus. The protein localises to the chromosome. It localises to the centromere. In terms of biological role, plays a central role in chromosome cohesion during meiosis I by preventing premature dissociation of cohesin complex from centromeres after prophase, when most of cohesin complex dissociates from chromosomes arms. Required for maintenance of centromeric cohesion before prophase II and correct segregation of chromatids during meiosis II. Has apparently no function in mitosis. The protein is Shugoshin-1 of Zea mays (Maize).